A 434-amino-acid polypeptide reads, in one-letter code: N-acylneuraminate cytidylyltransferase (434 aa).

Methionine 1 bears the N-acetylmethionine mark. Residues methionine 1–proline 42 form a disordered region. The BC1 motif motif lies at proline 15 to serine 31. Omega-N-methylarginine occurs at positions 37 and 52. Positions 52, 62, 111, 120, 122, and 143 each coordinate substrate. The short motif at lysine 200 to aspartate 206 is the BC2 motif element. Arginine 201 is a catalytic residue. Residues lysine 269–lysine 276 carry the BC3 motif motif.

This sequence belongs to the CMP-NeuNAc synthase family. In terms of assembly, homotetramer; the active enzyme is formed by a dimer of dimers. As to expression, ubiquitously expressed. Expressed in pancreas, kidney, liver, skeletal muscle, lung, placenta, brain, heart, colon, PBL, small intestine, ovary, testis, prostate, thymus and spleen.

It is found in the nucleus. The catalysed reaction is an N-acylneuraminate + CTP = a CMP-N-acyl-beta-neuraminate + diphosphate. The protein operates within amino-sugar metabolism; N-acetylneuraminate metabolism. Functionally, catalyzes the activation of N-acetylneuraminic acid (NeuNAc) to cytidine 5'-monophosphate N-acetylneuraminic acid (CMP-NeuNAc), a substrate required for the addition of sialic acid. Has some activity toward NeuNAc, N-glycolylneuraminic acid (Neu5Gc) or 2-keto-3-deoxy-D-glycero-D-galacto-nononic acid (KDN). The polypeptide is N-acylneuraminate cytidylyltransferase (CMAS) (Homo sapiens (Human)).